The following is a 206-amino-acid chain: Large ribosomal subunit protein bL25 (206 aa).

The tract at residues 1-91 (MEYRLKAYYR…RPEHVDFFVL (91 aa)) is bL25 domain. Residues 92-206 (SDEPVEMYVP…IKKGKEEEEE (115 aa)) are CTC domain. The interval 184–206 (AEEAAAEVAEPEVIKKGKEEEEE) is disordered. Residues 195–206 (EVIKKGKEEEEE) show a composition bias toward basic and acidic residues.

The protein belongs to the bacterial ribosomal protein bL25 family. CTC subfamily. In terms of assembly, part of the 50S ribosomal subunit. Contacts the 5S rRNA.

This is one of 3 proteins that mediate the attachment of the 5S rRNA onto the large ribosomal subunit. The sequence is that of Large ribosomal subunit protein bL25 (rplY) from Thermus thermophilus.